A 58-amino-acid chain; its full sequence is Large ribosomal subunit protein uL30 (58 aa).

Belongs to the universal ribosomal protein uL30 family. In terms of assembly, part of the 50S ribosomal subunit.

This chain is Large ribosomal subunit protein uL30, found in Pseudomonas entomophila (strain L48).